We begin with the raw amino-acid sequence, 209 residues long: RNA chaperone ProQ (209 aa).

The tract at residues 105–148 (ESQDKAKAKRAALAPKPAAKKAPKKVAVPQRAKTERPAKPAPKA) is disordered.

It belongs to the ProQ family.

The protein resides in the cytoplasm. In terms of biological role, RNA chaperone with significant RNA binding, RNA strand exchange and RNA duplexing activities. The polypeptide is RNA chaperone ProQ (Shewanella baltica (strain OS223)).